The following is a 395-amino-acid chain: Galactokinase (395 aa).

Substrate is bound at residue 39 to 42; that stretch reads EHTD. ATP contacts are provided by residues Ser-73 and 127–133; that span reads GAGLSSS. Mg(2+)-binding residues include Ser-133 and Glu-165. Asp-177 functions as the Proton acceptor in the catalytic mechanism. Tyr-227 contacts substrate.

Belongs to the GHMP kinase family. GalK subfamily.

It localises to the cytoplasm. The enzyme catalyses alpha-D-galactose + ATP = alpha-D-galactose 1-phosphate + ADP + H(+). It participates in carbohydrate metabolism; galactose metabolism. Its function is as follows. Catalyzes the transfer of the gamma-phosphate of ATP to D-galactose to form alpha-D-galactose-1-phosphate (Gal-1-P). The sequence is that of Galactokinase from Halalkalibacterium halodurans (strain ATCC BAA-125 / DSM 18197 / FERM 7344 / JCM 9153 / C-125) (Bacillus halodurans).